The following is a 675-amino-acid chain: DNA ligase (675 aa).

NAD(+)-binding positions include 41–45, 90–91, and Glu120; these read DAEYD and SL. The N6-AMP-lysine intermediate role is filled by Lys122. Residues Arg143, Glu178, Lys295, and Lys319 each coordinate NAD(+). Zn(2+)-binding residues include Cys413, Cys416, Cys431, and Cys436. In terms of domain architecture, BRCT spans 596–675; sequence GVPQTFAGKT…ADFLQLIDRV (80 aa).

The protein belongs to the NAD-dependent DNA ligase family. LigA subfamily. The cofactor is Mg(2+). Mn(2+) is required as a cofactor.

The catalysed reaction is NAD(+) + (deoxyribonucleotide)n-3'-hydroxyl + 5'-phospho-(deoxyribonucleotide)m = (deoxyribonucleotide)n+m + AMP + beta-nicotinamide D-nucleotide.. In terms of biological role, DNA ligase that catalyzes the formation of phosphodiester linkages between 5'-phosphoryl and 3'-hydroxyl groups in double-stranded DNA using NAD as a coenzyme and as the energy source for the reaction. It is essential for DNA replication and repair of damaged DNA. This chain is DNA ligase, found in Heliobacterium modesticaldum (strain ATCC 51547 / Ice1).